The primary structure comprises 526 residues: NAD(P)H-quinone oxidoreductase subunit 2 (526 aa).

Transmembrane regions (helical) follow at residues 16 to 36 (ILPE…DLIV), 43 to 63 (WIPY…YLGW), 80 to 100 (LSIL…MMSV), 107 to 127 (GTAL…GMFL), 133 to 153 (LVMI…LTGY), 168 to 188 (LLIG…LYGL), 211 to 231 (LALA…ISAV), 245 to 265 (PTPV…ALAI), 279 to 299 (WHFI…VVAL), 307 to 327 (MLAY…VAGT), 335 to 355 (IFYL…VILF), 379 to 399 (LGLS…GFFG), 401 to 421 (IYLF…LGLI), and 469 to 489 (LVLS…LFVI).

The protein belongs to the complex I subunit 2 family. As to quaternary structure, NDH-1 can be composed of about 15 different subunits; different subcomplexes with different compositions have been identified which probably have different functions.

Its subcellular location is the cellular thylakoid membrane. It catalyses the reaction a plastoquinone + NADH + (n+1) H(+)(in) = a plastoquinol + NAD(+) + n H(+)(out). The enzyme catalyses a plastoquinone + NADPH + (n+1) H(+)(in) = a plastoquinol + NADP(+) + n H(+)(out). Functionally, NDH-1 shuttles electrons from an unknown electron donor, via FMN and iron-sulfur (Fe-S) centers, to quinones in the respiratory and/or the photosynthetic chain. The immediate electron acceptor for the enzyme in this species is believed to be plastoquinone. Couples the redox reaction to proton translocation, and thus conserves the redox energy in a proton gradient. Cyanobacterial NDH-1 also plays a role in inorganic carbon-concentration. In Picosynechococcus sp. (strain ATCC 27264 / PCC 7002 / PR-6) (Agmenellum quadruplicatum), this protein is NAD(P)H-quinone oxidoreductase subunit 2.